Here is a 298-residue protein sequence, read N- to C-terminus: Octopine catabolism/uptake operon regulatory protein OccR (298 aa).

One can recognise an HTH lysR-type domain in the interval 1–58 (MNLRQVEAFRAVMLTGQMTAAAELMLVTQPAISRLIKDFEQATKLQLFERRGNHIIPT). A DNA-binding region (H-T-H motif) is located at residues 18 to 37 (MTAAAELMLVTQPAISRLIK).

This sequence belongs to the LysR transcriptional regulatory family.

Its function is as follows. Positive regulatory protein for the occ operon involved in octopine catabolism and uptake. Also acts as a negative regulator of its expression. This chain is Octopine catabolism/uptake operon regulatory protein OccR (occR), found in Agrobacterium tumefaciens (strain Ach5).